We begin with the raw amino-acid sequence, 69 residues long: U-Asilidin(12)-Dg3b (69 aa).

The first 19 residues, 1–19 (MRFLNIFLFFAVMIAFVSA), serve as a signal peptide directing secretion. The propeptide occupies 20–33 (SPVLEEEEIDIEPR). 3 cysteine pairs are disulfide-bonded: C36–C59, C45–C65, and C49–C67.

The protein belongs to the asilidin-12 family. In terms of tissue distribution, expressed by the venom gland.

The protein localises to the secreted. Its function is as follows. The recombinant peptide moderately increases Kv11.1/KCNH2/ERG1 currents and shifts the voltage-dependence of the channel activation to hyperpolarised potentials. In vivo, induces neurotoxic effects when injected into insects (tested on L.cuprina and A.domesticus). The polypeptide is U-Asilidin(12)-Dg3b (Dolopus genitalis (Giant Australian assassin fly)).